The chain runs to 200 residues: QLCLLQPLGSGGFGSVYKATYHGATVAVKQVKKSSKNRLASRQSFWAELNVAWLQHDNVVRVVAASTCAPASQNSLGTIIMEYVGNITLHHVIYGTGDVWRQGEDDEGGCGRLALSMEETVCYSCDIMTGLAFLHSQGIVHLDLKPANVFITEQGVCKIGDFGCSQKLEEGLSQSLHVCQQGGTYTHRAPELLKGERVTA.

One can recognise a Protein kinase domain in the interval 2-200; sequence LCLLQPLGSG…ELLKGERVTA (199 aa). Residues 8-16 and Lys29 contribute to the ATP site; that span reads LGSGGFGSV. The Proton acceptor role is filled by Asp143.

Belongs to the protein kinase superfamily. Ser/Thr protein kinase family.

The enzyme catalyses L-seryl-[protein] + ATP = O-phospho-L-seryl-[protein] + ADP + H(+). It carries out the reaction L-threonyl-[protein] + ATP = O-phospho-L-threonyl-[protein] + ADP + H(+). The chain is Serine/threonine-protein kinase mos (MOS) from Nycticorax nycticorax (Black-crowned night-heron).